A 1266-amino-acid polypeptide reads, in one-letter code: TBC1 domain family member 9 (1266 aa).

GRAM domains are found at residues 146 to 213 (VKFH…EKNA) and 293 to 361 (ERYR…EKAD). The tract at residues 415–456 (SYNSSDDEVYSRPSSLVSSSPQRSTSSDADGERQFNLNGNSV) is disordered. The segment covering 425-441 (SRPSSLVSSSPQRSTSS) has biased composition (low complexity). Residues 515–702 (GIPESMRGEL…VVVDCFFYEG (188 aa)) form the Rab-GAP TBC domain. In terms of domain architecture, EF-hand spans 886–921 (HSDVLASRLFQLLDENGDSLINFREFVSGLSAACHG). 2 disordered regions span residues 1075-1095 (AKEG…PGVL) and 1132-1164 (DIKL…SMSS).

Its function is as follows. May act as a GTPase-activating protein for Rab family protein(s). The polypeptide is TBC1 domain family member 9 (TBC1D9) (Homo sapiens (Human)).